The primary structure comprises 91 residues: Acylphosphatase (91 aa).

The region spanning 3–91 (CLRAIVKGKV…ANYSDFRIKH (89 aa)) is the Acylphosphatase-like domain. Residues Arg18 and Asn36 contribute to the active site.

The protein belongs to the acylphosphatase family.

The catalysed reaction is an acyl phosphate + H2O = a carboxylate + phosphate + H(+). The chain is Acylphosphatase (acyP) from Dehalococcoides mccartyi (strain CBDB1).